A 346-amino-acid polypeptide reads, in one-letter code: MAPRSLLLLLSGALALTDTWAGSHSLRYFSTAVSRPGRGEPRYIAVEYVDDTQFLRFDSDAAIPRMEPREPWVEQEGPQYWEWTTGYAKANAQTDRVALRNLLRRYNQSEAGSHTLQGMNGCDMGPDGRLLRGYHQHAYDGKDYISLNEDLRSWTAADTVAQITQRFYEAEEYAEEFRTYLEGECLELLRRYLENGKETLQRADPPKAHVAHHPISDHEATLRCWALGFYPAEITLTWQRDGEEQTQDTELVETRPAGDGTFQKWAAVVVPPGEEQRYTCHVQHEGLPQPLILRWEQSPQPTIPIVGIVAGLVVLGAVVTGAVVAAVMWRKKSSDRNRGSYSQAAV.

A signal peptide spans 1–21; it reads MAPRSLLLLLSGALALTDTWA. Residues 22–111 are alpha-1; that stretch reads GSHSLRYFST…LLRRYNQSEA (90 aa). Residues 22-305 lie on the Extracellular side of the membrane; it reads GSHSLRYFST…EQSPQPTIPI (284 aa). A peptide antigen contacts are provided by asparagine 91 and arginine 105. Residue asparagine 107 is glycosylated (N-linked (GlcNAc...) asparagine). An alpha-2 region spans residues 112-203; that stretch reads GSHTLQGMNG…ENGKETLQRA (92 aa). Cystine bridges form between cysteine 122–cysteine 185 and cysteine 224–cysteine 280. 3 residues coordinate a peptide antigen: threonine 164, tyrosine 168, and glutamate 176. The tract at residues 204-295 is alpha-3; the sequence is DPPKAHVAHH…GLPQPLILRW (92 aa). One can recognise an Ig-like C1-type domain in the interval 206–296; it reads PKAHVAHHPI…LPQPLILRWE (91 aa). The interval 296–305 is connecting peptide; it reads EQSPQPTIPI. A helical transmembrane segment spans residues 306 to 329; the sequence is VGIVAGLVVLGAVVTGAVVAAVMW. The Cytoplasmic segment spans residues 330–346; that stretch reads RKKSSDRNRGSYSQAAV. The Sorting signal sequence; Golgi-retention signal; ER-retention signal signature appears at 336–338; sequence RNR.

This sequence belongs to the MHC class I family. In terms of assembly, forms a heterotrimer with B2M and a self-peptide. Binds a diverse number of peptides ranging from 7 to more than 30 amino acids. Peptide-bound HLA-F-B2M interacts with LILRB1 and LILRB2 but not with KIR3DS1 or KIR3DL2; this interaction is direct. The OC form interacts with KIR3DS1, KIR2DS4 and KIR3DL2; this interaction is direct. Interacts with TAP1-TAP2 complex and CALR; this interaction is required for appropriate folding and peptide loading. Interacts with the coat protein complex II and 14-3-3 proteins; these interactions likely control the anterograde ER-to-Golgi transport of HLA-F. HLA-F-B2M complex interacts with the heavy chain of other MHC class I molecules including HLA-A and HLA-E; this interaction may regulate the intracellular trafficking and the stability of peptide-free MHC class I OCs. In terms of processing, N-glycosylated. In terms of tissue distribution, expressed in resting B cells (at protein level). Expressed in secondary lymphoid organs rich in B and T cells such as the tonsils, spleen, and thymus (at protein level). Expressed in the endothelial cells of the tonsils. Expressed on activated lymphoid cells including B cells, NK cells, CD4+ T cells and memory T cells (at protein level). Expressed in motor neurons of spinal cord.

The protein localises to the cell membrane. Its subcellular location is the early endosome membrane. It localises to the lysosome membrane. Functionally, non-classical major histocompatibility class Ib molecule postulated to play a role in immune surveillance, immune tolerance and inflammation. Functions in two forms, as a heterotrimeric complex with B2M/beta-2 microglobulin and a peptide (peptide-bound HLA-F-B2M) and as an open conformer (OC) devoid of peptide and B2M (peptide-free OC). In complex with B2M, presents non-canonical self-peptides carrying post-translational modifications, particularly phosphorylated self-peptides. Peptide-bound HLA-F-B2M acts as a ligand for LILRB1 inhibitory receptor, a major player in maternal-fetal tolerance. Peptide-free OC acts as a ligand for KIR3DS1 and KIR3DL2 receptors. Upon interaction with activating KIR3DS1 receptor on NK cells, triggers NK cell degranulation and anti-viral cytokine production. Through interaction with KIR3DL2 receptor, inhibits NK and T cell effector functions. May interact with other MHC class I OCs to cross-present exogenous viral, tumor or minor histompatibility antigens to cytotoxic CD8+ T cells, triggering effector and memory responses. May play a role in inflammatory responses in the peripheral nervous system. Through interaction with KIR3DL2, may protect motor neurons from astrocyte-induced toxicity. The polypeptide is HLA class I histocompatibility antigen, alpha chain F (Homo sapiens (Human)).